The primary structure comprises 190 residues: DNA-binding transcriptional repressor TetR (190 aa).

Positions 6-66 constitute an HTH tetR-type domain; that stretch reads ETRSAALLAV…AALDAHDASF (61 aa). The H-T-H motif DNA-binding region spans 29-48; that stretch reads SMDSVAALAHASKTTIYRRW.

As to quaternary structure, homodimer.

Functionally, binds to its own palindromic promoter and represses transcription of its operon; addition of tetracycline or doxycycline (but not tigecycline) interferes with DNA binding. Addition of TetX to the DNA-TetR-antibiotic complex restores DNA binding. The chain is DNA-binding transcriptional repressor TetR from Mycobacteroides abscessus (strain ATCC 19977 / DSM 44196 / CCUG 20993 / CIP 104536 / JCM 13569 / NCTC 13031 / TMC 1543 / L948) (Mycobacterium abscessus).